The primary structure comprises 378 residues: Spermidine/putrescine import ATP-binding protein PotA (378 aa).

An ABC transporter domain is found at 18–248; that stretch reads VQLAGIRKCF…PKNLFVAGFI (231 aa). 50–57 contacts ATP; that stretch reads GPSGCGKT.

It belongs to the ABC transporter superfamily. Spermidine/putrescine importer (TC 3.A.1.11.1) family. As to quaternary structure, the complex is composed of two ATP-binding proteins (PotA), two transmembrane proteins (PotB and PotC) and a solute-binding protein (PotD).

Its subcellular location is the cell inner membrane. The enzyme catalyses ATP + H2O + polyamine-[polyamine-binding protein]Side 1 = ADP + phosphate + polyamineSide 2 + [polyamine-binding protein]Side 1.. Functionally, part of the ABC transporter complex PotABCD involved in spermidine/putrescine import. Responsible for energy coupling to the transport system. The protein is Spermidine/putrescine import ATP-binding protein PotA of Shigella flexneri.